A 285-amino-acid chain; its full sequence is NADH-dependent oxidoreductase ucdB (285 aa).

Threonine 87 serves as a coordination point for NAD(+). Lysine 156 is an active-site residue.

Belongs to the HIBADH-related family. NP60 subfamily.

It functions in the pathway secondary metabolite biosynthesis. In terms of biological role, nonribosomal peptide synthetase that mediates the biosynthesis of usterphenyllins and uscandidusins, p-terphenyl derivatives. Within the pathway, ucdB alone catalyzes both reduction and dehydration of atromentin to form a terphenyl triol intermediate. The pathway begin with the biosynthesis of 4-hydroxyphenylpyruvate (HPPA) from L-tyrosine, possibly by the aminotransferase ucdG. The nonribosomal peptide synthetase ucdA then condenses two HPPA units to produce atromentin. The key step in this pathway is the reduction and dehydration of atromentin to form a terphenyl triol intermediate, performed by the NAD-dependent dehydrogenase ucdB. Further O-methylation by the methyltransferase ucdC forms terphenyllin carrying two methoxy moieties at C-9 and C-12, and subsequent dihydroxylation at C-3 of ring A and C-15 of ring C by the flavin-dependent oxygenase ucdD leads to 3,15-dihydroxyterphenyllin. Prenylation by ucdE at position C-5 of ring A forms usterphenyllin B, and is followed by a second prenylation at position C-14 of ring C to form usterphenyllin A. The following furan ring formation that leads to uscandidusins A and B was proven to be an unexpected spontaneous non-enzymatic reaction. The sequence is that of NADH-dependent oxidoreductase ucdB from Aspergillus ustus.